A 251-amino-acid chain; its full sequence is 2,3-bisphosphoglycerate-dependent phosphoglycerate mutase (251 aa).

Substrate contacts are provided by residues 8-15 (RHGESLWN), 21-22 (TG), R60, 87-90 (ERHY), K98, 114-115 (RR), and 183-184 (GN). H9 serves as the catalytic Tele-phosphohistidine intermediate. E87 (proton donor/acceptor) is an active-site residue.

This sequence belongs to the phosphoglycerate mutase family. BPG-dependent PGAM subfamily.

It catalyses the reaction (2R)-2-phosphoglycerate = (2R)-3-phosphoglycerate. The protein operates within carbohydrate degradation; glycolysis; pyruvate from D-glyceraldehyde 3-phosphate: step 3/5. In terms of biological role, catalyzes the interconversion of 2-phosphoglycerate and 3-phosphoglycerate. The chain is 2,3-bisphosphoglycerate-dependent phosphoglycerate mutase from Thermoanaerobacter sp. (strain X514).